Consider the following 112-residue polypeptide: Transmembrane protein 14 homolog (112 aa).

A helical transmembrane segment spans residues 3-23 (VDWFGYVYAATVAAGGIMGYA).

The protein belongs to the TMEM14 family.

The protein resides in the membrane. The chain is Transmembrane protein 14 homolog from Drosophila melanogaster (Fruit fly).